A 410-amino-acid polypeptide reads, in one-letter code: Beta-arrestin-2 (410 aa).

The residue at position 48 (Y48) is a Phosphotyrosine. Residues P176 and P181 each carry the hydroxyproline; by PHD2 modification. Residues A241–C410 are interaction with TRAF6. Phosphoserine is present on S361. The tract at residues R364–C410 is interaction with AP2B1. T383 bears the Phosphothreonine mark. The [DE]-X(1,2)-F-X-X-[FL]-X-X-X-R motif signature appears at D386–R396.

It belongs to the arrestin family. As to quaternary structure, homooligomer; the self-association is mediated by InsP6-binding. Heterooligomer with ARRB1; the association is mediated by InsP6-binding. Interacts with ADRB2 and CHRM2. Interacts with PDE4A. Interacts with PDE4D. Interacts with MAPK10, MAPK1 and MAPK3. Interacts with DRD2. Interacts with FSHR. Interacts with CLTC. Interacts with HTR2C. Interacts with CCR5. Interacts with CXCR4. Interacts with SRC. Interacts with DUSP16; the interaction is interrupted by stimulation of AGTR1 and activation of MAPK10. Interacts with CHUK; the interaction is enhanced stimulation of ADRB2. Interacts with RELA. Interacts with MDM2; the interaction is enhanced by activation of GPCRs. Interacts with SLC9A5. Interacts with TRAF6. Interacts with IGF1R. Interacts with ENG. Interacts with ARRB2. Interacts with KIR2DL1, KIR2DL3 and KIR2DL4. Interacts with LDLR. Interacts with AP2B1. Interacts with C5AR1. Interacts with RAF1. Interacts with MAP2K1. Interacts with MAPK1. Interacts with MAPK10; the interaction enhances MAPK10 activation by MAP3K5. Interacts with MAP2K4; the interaction is enhanced by presence of MAP3K5 and MAPK10. Interacts with MAP3K5. Interacts with AKT1. Interacts with IKBKB and MAP3K14. Interacts with SMO (activated). Interacts with GSK3A and GSK3B. Interacts with CXCR4; the interaction is dependent on C-terminal phosphorylation of CXCR4 and allows activation of MAPK1 and MAPK3. Interacts with GPR143. Interacts with HCK and CXCR1 (phosphorylated). Associates with protein phosphatase 2A (PP2A). Interacts with ACKR3 and ACKR4. Interacts with ARRDC1; the interaction is direct. Interacts with GPR61, GPR62 and GPR135. Interacts (via NACHT and LRR domains) with NLRP3; this interaction is direct and inducible by omega-3 polyunsaturated fatty acids (PUFAs). Interacts with FFAR4 (via C-terminus); this interaction is stimulated by long-chain fatty acids (LCFAs). Interacts with GPR35. Interacts with GPR84. Interacts with TIGIT; this interaction inhibits the NF-kappa-B pathway. Interacts with TGFBR3. Phosphorylated at Thr-383 in the cytoplasm; probably dephosphorylated at the plasma membrane. The phosphorylation does not regulate internalization and recycling of ADRB2, interaction with clathrin or AP2B1. Post-translationally, the ubiquitination status appears to regulate the formation and trafficking of beta-arrestin-GPCR complexes and signaling. Ubiquitination appears to occur GPCR-specific. Ubiquitinated by MDM2; the ubiquitination is required for rapid internalization of ADRB2. Deubiquitinated by USP33; the deubiquitination leads to a dissociation of the beta-arrestin-GPCR complex. Stimulation of a class A GPCR, such as ADRB2, induces transient ubiquitination and subsequently promotes association with USP33. Stimulation of a class B GPCR promotes a sustained ubiquitination. Deubiquitinated by USP20; allowing USP20 to deubiquitinate TRAF6 leading to inhibition of NF-kappa-B signaling. In terms of processing, hydroxylation by PHD2 modulates the rate of internalization by slowing down recruitment to the plasma membrane and inhibiting subsequent co-internalization with class A receptors. In terms of tissue distribution, predominantly localized in neuronal tissues and in the spleen.

The protein resides in the cytoplasm. Its subcellular location is the nucleus. It localises to the cell membrane. It is found in the membrane. The protein localises to the clathrin-coated pit. The protein resides in the cytoplasmic vesicle. Its function is as follows. Functions in regulating agonist-mediated G-protein coupled receptor (GPCR) signaling by mediating both receptor desensitization and resensitization processes. During homologous desensitization, beta-arrestins bind to the GPRK-phosphorylated receptor and sterically preclude its coupling to the cognate G-protein; the binding appears to require additional receptor determinants exposed only in the active receptor conformation. The beta-arrestins target many receptors for internalization by acting as endocytic adapters (CLASPs, clathrin-associated sorting proteins) and recruiting the GPRCs to the adapter protein 2 complex 2 (AP-2) in clathrin-coated pits (CCPs). However, the extent of beta-arrestin involvement appears to vary significantly depending on the receptor, agonist and cell type. Internalized arrestin-receptor complexes traffic to intracellular endosomes, where they remain uncoupled from G-proteins. Two different modes of arrestin-mediated internalization occur. Class A receptors, like ADRB2, OPRM1, ENDRA, D1AR and ADRA1B dissociate from beta-arrestin at or near the plasma membrane and undergo rapid recycling. Class B receptors, like AVPR2, AGTR1, NTSR1, TRHR and TACR1 internalize as a complex with arrestin and traffic with it to endosomal vesicles, presumably as desensitized receptors, for extended periods of time. Receptor resensitization then requires that receptor-bound arrestin is removed so that the receptor can be dephosphorylated and returned to the plasma membrane. Mediates endocytosis of CCR7 following ligation of CCL19 but not CCL21. Involved in internalization of P2RY1, P2RY4, P2RY6 and P2RY11 and ATP-stimulated internalization of P2RY2. Involved in phosphorylation-dependent internalization of OPRD1 and subsequent recycling or degradation. Involved in ubiquitination of IGF1R. Beta-arrestins function as multivalent adapter proteins that can switch the GPCR from a G-protein signaling mode that transmits short-lived signals from the plasma membrane via small molecule second messengers and ion channels to a beta-arrestin signaling mode that transmits a distinct set of signals that are initiated as the receptor internalizes and transits the intracellular compartment. Acts as a signaling scaffold for MAPK pathways such as MAPK1/3 (ERK1/2) and MAPK10 (JNK3). ERK1/2 and JNK3 activated by the beta-arrestin scaffold are largely excluded from the nucleus and confined to cytoplasmic locations such as endocytic vesicles, also called beta-arrestin signalosomes. Acts as a signaling scaffold for the AKT1 pathway. GPCRs for which the beta-arrestin-mediated signaling relies on both ARRB1 and ARRB2 (codependent regulation) include ADRB2, F2RL1 and PTH1R. For some GPCRs the beta-arrestin-mediated signaling relies on either ARRB1 or ARRB2 and is inhibited by the other respective beta-arrestin form (reciprocal regulation). Increases ERK1/2 signaling in AGTR1- and AVPR2-mediated activation (reciprocal regulation). Involved in CCR7-mediated ERK1/2 signaling involving ligand CCL19. Is involved in type-1A angiotensin II receptor/AGTR1-mediated ERK activity. Is involved in type-1A angiotensin II receptor/AGTR1-mediated MAPK10 activity. Is involved in dopamine-stimulated AKT1 activity in the striatum by disrupting the association of AKT1 with its negative regulator PP2A. Involved in AGTR1-mediated chemotaxis. Appears to function as signaling scaffold involved in regulation of MIP-1-beta-stimulated CCR5-dependent chemotaxis. Involved in attenuation of NF-kappa-B-dependent transcription in response to GPCR or cytokine stimulation by interacting with and stabilizing CHUK. Suppresses UV-induced NF-kappa-B-dependent activation by interacting with CHUK. The function is promoted by stimulation of ADRB2 and dephosphorylation of ARRB2. Involved in IL8-mediated granule release in neutrophils. Involved in p53/TP53-mediated apoptosis by regulating MDM2 and reducing the MDM2-mediated degradation of p53/TP53. May serve as nuclear messenger for GPCRs. Upon stimulation of OR1D2, may be involved in regulation of gene expression during the early processes of fertilization. Also involved in regulation of receptors other than GPCRs. Involved in endocytosis of TGFBR2 and TGFBR3 and down-regulates TGF-beta signaling such as NF-kappa-B activation. Involved in endocytosis of low-density lipoprotein receptor/LDLR. Involved in endocytosis of smoothened homolog/Smo, which also requires GRK2. Involved in endocytosis of SLC9A5. Involved in endocytosis of ENG and subsequent TGF-beta-mediated ERK activation and migration of epithelial cells. Involved in Toll-like receptor and IL-1 receptor signaling through the interaction with TRAF6 which prevents TRAF6 autoubiquitination and oligomerization required for activation of NF-kappa-B and JUN. Involved in insulin resistance by acting as insulin-induced signaling scaffold for SRC, AKT1 and INSR. Involved in regulation of inhibitory signaling of natural killer cells by recruiting PTPN6 and PTPN11 to KIR2DL1. Involved in the internalization of the atypical chemokine receptor ACKR3. Acts as an adapter protein coupling FFAR4 receptor to specific downstream signaling pathways, as well as mediating receptor endocytosis. During the activation step of NLRP3 inflammasome, directly associates with NLRP3 leading to inhibition of pro-inflammatory cytokine release and inhibition of inflammation. This chain is Beta-arrestin-2 (Arrb2), found in Mus musculus (Mouse).